Reading from the N-terminus, the 142-residue chain is Large ribosomal subunit protein uL11 (142 aa).

Belongs to the universal ribosomal protein uL11 family. As to quaternary structure, part of the ribosomal stalk of the 50S ribosomal subunit. Interacts with L10 and the large rRNA to form the base of the stalk. L10 forms an elongated spine to which L12 dimers bind in a sequential fashion forming a multimeric L10(L12)X complex. One or more lysine residues are methylated.

Functionally, forms part of the ribosomal stalk which helps the ribosome interact with GTP-bound translation factors. In Stenotrophomonas maltophilia (strain R551-3), this protein is Large ribosomal subunit protein uL11.